The sequence spans 103 residues: Small ribosomal subunit protein uS10c (103 aa).

It belongs to the universal ribosomal protein uS10 family. In terms of assembly, part of the 30S ribosomal subunit.

It is found in the plastid. Its subcellular location is the chloroplast. Its function is as follows. Involved in the binding of tRNA to the ribosomes. In Emiliania huxleyi (Coccolithophore), this protein is Small ribosomal subunit protein uS10c.